Consider the following 757-residue polypeptide: MDVNPTLLFLKVPAQNAISTTFPYTGDPPYSHGTGTGYTMDTVNRTHQYSERGKWTTNTETGAPQLNPIDGPLPEDNEPTGYAQTDCVLEAMAFLEKSHPGIFENSCLETMEVVQQTRVDKLTQGRQTFDWTLNRNQPAATALANTIEVFRLNGLTASESGRLIDFLKDVMESMDKEEMEIVTHFQRKRRVRDNMTKKMVTQRTIGKKKQKLNKRSYIIRALTLNTMTKDAERGKLKRRAIATPGMQIRGFVYFVETLARSICEKLEQSGLPVGGNEKKAKLANVVRKMMTNSQDTELSFTITGDNTKWNENQNPRMFLAMITYITRNQPEWFRNVLSIAPIMFSNKMARLGKGYMFESKNMKLRTQIPAEMLSGIDLRYFNDSTRKKIEKIRPLLIDGAASLSPGMMMGMFNMLSTVLGVSILNLGQKEYTKTAYWWDGLQSSDDFALIVNALNHEGIQAGVDRFYRTCKLLGINMSKKKSYINRTGTFEFTSFFYRYGFVANFSMELPSFGVSGINESADMSIGVTVIKNNMINNDLGPATAQMALQLFIKDYRYTYRCHRGDTQIQTRRSFEIKKLWDQTHSKAGLLVSDGGPNLYNIRNLHIPEVCLKWELMDKDYQGRLCNPLNPFVSHKEIESVNNAVVMPSHGPAKTMEYDAVATTHSWVPKRNRSILNTSQRGILEDEQMYQKCCNLFEKFFPSSSYRRPVGISSMVEAMVSRARIDARIDFESGRIKKEDFAEIMKICSTIEDLRRQK.

A disordered region spans residues 52–78 (RGKWTTNTETGAPQLNPIDGPLPEDNE). Residues 55–64 (WTTNTETGAP) are compositionally biased toward polar residues. 2 short sequence motifs (nuclear localization signal) span residues 187–195 (RKRRVRDNM) and 203–216 (RTIG…NKRS). Residues 249-256 (RGFVYFVE) are promoter-binding site. One can recognise a RdRp catalytic domain in the interval 286 to 483 (VRKMMTNSQD…GINMSKKKSY (198 aa)).

Belongs to the influenza viruses polymerase PB1 family. Influenza RNA polymerase is composed of three subunits: PB1, PB2 and PA. Interacts (via N-terminus) with PA (via C-terminus). Interacts (via C-terminus) with PB2 (via N-terminus); this interaction is essential for transcription initiation. Interacts (via C-terminus) with human PKP2 (via N-terminus); the interaction competitively inhibits the interaction between the RNA polymerase subunits PB1 and PB2. Phosphorylated by host PRKCA.

It is found in the host nucleus. Its subcellular location is the host cytoplasm. It catalyses the reaction RNA(n) + a ribonucleoside 5'-triphosphate = RNA(n+1) + diphosphate. Functionally, RNA-dependent RNA polymerase which is responsible for replication and transcription of virus RNA segments. The transcription of viral mRNAs occurs by a unique mechanism called cap-snatching. 5' methylated caps of cellular mRNAs are cleaved after 10-13 nucleotides by PA. In turn, these short capped RNAs are used as primers by PB1 for transcription of viral mRNAs. During virus replication, PB1 initiates RNA synthesis and copy vRNA into complementary RNA (cRNA) which in turn serves as a template for the production of more vRNAs. This chain is RNA-directed RNA polymerase catalytic subunit, found in Influenza A virus (strain A/Swine/Tennessee/26/1977 H1N1).